A 153-amino-acid chain; its full sequence is Ribosomal RNA large subunit methyltransferase H (153 aa).

Residues Ile75, Gly103, and 121–126 each bind S-adenosyl-L-methionine; that span reads LSAMTF.

It belongs to the RNA methyltransferase RlmH family. Homodimer.

It localises to the cytoplasm. It catalyses the reaction pseudouridine(1915) in 23S rRNA + S-adenosyl-L-methionine = N(3)-methylpseudouridine(1915) in 23S rRNA + S-adenosyl-L-homocysteine + H(+). Specifically methylates the pseudouridine at position 1915 (m3Psi1915) in 23S rRNA. The protein is Ribosomal RNA large subunit methyltransferase H of Helicobacter hepaticus (strain ATCC 51449 / 3B1).